The following is a 470-amino-acid chain: Serine/threonine-protein kinase PEPKR2 (470 aa).

The region spanning 107-355 (YVFGRNIGKG…ADEVLRHPWI (249 aa)) is the Protein kinase domain. ATP contacts are provided by residues 113–121 (IGKGKFGSV) and K136. D224 acts as the Proton acceptor in catalysis. Residues 377–386 (GSSTCLQNRS) are compositionally biased toward polar residues. 2 disordered regions span residues 377-419 (GSST…EEED) and 441-464 (RSRV…TSTS). The segment covering 387–403 (PTEKTDLNRADREKKIP) has biased composition (basic and acidic residues). Residues 445–464 (CSPTNNPIEQQHSSNLTSTS) are compositionally biased toward polar residues.

The protein belongs to the protein kinase superfamily. Ser/Thr protein kinase family.

It carries out the reaction L-seryl-[protein] + ATP = O-phospho-L-seryl-[protein] + ADP + H(+). It catalyses the reaction L-threonyl-[protein] + ATP = O-phospho-L-threonyl-[protein] + ADP + H(+). The protein is Serine/threonine-protein kinase PEPKR2 (PEPKR2) of Arabidopsis thaliana (Mouse-ear cress).